A 292-amino-acid polypeptide reads, in one-letter code: Recombination-promoting nuclease RpnA (292 aa).

Belongs to the Rpn/YhgA-like nuclease family. The cofactor is Mg(2+).

Its activity is regulated as follows. Inhibited by EDTA, Zn(2+) and by Mg(2+) plus Mn(2+); stimulated by Ca(2+) in the presence of Mg(2+). A low activity DNA endonuclease yielding 3'-hydroxyl ends, equally active on ss or dsDNA, not active on dsRNA. Shows no sequence specificity. Upon expression enhances RecA-independent DNA recombination 49-fold, concomitantly reducing viability by 88% and probably inducing DNA damage as measured by induction of the SOS repair response in RecA cells. RecA-independent DNA recombination leads to replacement of recipient genes with large segments of donor DNA rather than DNA addition to the donor strain; increased expression of RpnA leads to smaller replacement segments, suggesting this protein may play a role in generating crossover events. This chain is Recombination-promoting nuclease RpnA, found in Escherichia coli (strain K12).